The chain runs to 366 residues: Ribosomal RNA large subunit methyltransferase M (366 aa).

S-adenosyl-L-methionine-binding positions include S188, 221–224, D240, D260, and D277; that span reads CPGG. Residue K306 is the Proton acceptor of the active site.

Belongs to the class I-like SAM-binding methyltransferase superfamily. RNA methyltransferase RlmE family. RlmM subfamily. Monomer.

It localises to the cytoplasm. It carries out the reaction cytidine(2498) in 23S rRNA + S-adenosyl-L-methionine = 2'-O-methylcytidine(2498) in 23S rRNA + S-adenosyl-L-homocysteine + H(+). In terms of biological role, catalyzes the 2'-O-methylation at nucleotide C2498 in 23S rRNA. The protein is Ribosomal RNA large subunit methyltransferase M of Citrobacter koseri (strain ATCC BAA-895 / CDC 4225-83 / SGSC4696).